A 253-amino-acid polypeptide reads, in one-letter code: Porin thermoregulatory protein EnvY (253 aa).

The 98-residue stretch at 149 to 246 (DSVCRIIQSD…GLTPLNYLAK (98 aa)) folds into the HTH araC/xylS-type domain. DNA-binding regions (H-T-H motif) lie at residues 166–187 (RIVASSLCLSPSLLKKKLKNEN) and 213–236 (ITQVAQLCGYSSTSYFISVFKAFY).

Influences the temperature-dependent expression of several E.coli envelope proteins, most notably the porins OmpF and OmpC and the lambda receptor, LamB. This chain is Porin thermoregulatory protein EnvY (envY), found in Escherichia coli (strain K12).